The sequence spans 181 residues: Dual-action ribosomal maturation protein DarP (181 aa).

Belongs to the DarP family.

It is found in the cytoplasm. Member of a network of 50S ribosomal subunit biogenesis factors which assembles along the 30S-50S interface, preventing incorrect 23S rRNA structures from forming. Promotes peptidyl transferase center (PTC) maturation. In Actinobacillus succinogenes (strain ATCC 55618 / DSM 22257 / CCUG 43843 / 130Z), this protein is Dual-action ribosomal maturation protein DarP.